Here is a 158-residue protein sequence, read N- to C-terminus: C-type lectin lectoxin-Enh7 (158 aa).

A signal peptide spans 1–23 (MGQFTVVSLGLLAVFLSLSGAKG). Disulfide bonds link C26–C37, C54–C154, and C129–C146. The 123-residue stretch at 33–155 (RNGVCNKLFP…CASLHPFICQ (123 aa)) folds into the C-type lectin domain. The short motif at 119–121 (EPN) is the Mannose-binding element. Ca(2+) contacts are provided by E127, N142, and D143.

The protein belongs to the true venom lectin family. Expressed by the venom gland.

The protein localises to the secreted. Mannose-binding lectin which recognizes specific carbohydrate structures and agglutinates a variety of animal cells by binding to cell-surface glycoproteins and glycolipids. May be a calcium-dependent lectin. In Pseudoferania polylepis (Macleay's water snake), this protein is C-type lectin lectoxin-Enh7.